The sequence spans 131 residues: Small ribosomal subunit protein bS6 (131 aa).

Positions 98–131 are disordered; that stretch reads EASPMARARDERDSRRGPAGERSYDEAHAEEIGE. Basic and acidic residues predominate over residues 104 to 131; that stretch reads RARDERDSRRGPAGERSYDEAHAEEIGE.

This sequence belongs to the bacterial ribosomal protein bS6 family.

Binds together with bS18 to 16S ribosomal RNA. This chain is Small ribosomal subunit protein bS6, found in Shewanella putrefaciens (strain CN-32 / ATCC BAA-453).